Here is a 178-residue protein sequence, read N- to C-terminus: Inner membrane-spanning protein YciB (178 aa).

The next 5 membrane-spanning stretches (helical) occupy residues 10–30 (IVLF…AVLM), 47–67 (LQTM…LTLA), 76–96 (WKPT…LWAL), 121–141 (WAWI…VLHW), and 151–171 (LWGY…IAPH).

This sequence belongs to the YciB family.

Its subcellular location is the cell inner membrane. Its function is as follows. Plays a role in cell envelope biogenesis, maintenance of cell envelope integrity and membrane homeostasis. The polypeptide is Inner membrane-spanning protein YciB (Verminephrobacter eiseniae (strain EF01-2)).